The primary structure comprises 508 residues: Probable metalloreductase AIM14 (508 aa).

The next 8 helical transmembrane spans lie at 18–38, 70–90, 100–120, 137–157, 168–188, 198–218, 222–242, and 347–367; these read LPYG…LIVM, PLLL…VAYI, LSYV…NPIL, FVTV…SLDP, LFNF…FASV, SFYV…PIHA, VTVP…ISYI, and VAIV…KYLQ. Residues 97 to 214 enclose the Ferric oxidoreductase domain; sequence LGRLSYVLVI…LGQWAMVFLV (118 aa). The region spanning 241–361 is the FAD-binding FR-type domain; it reads YIYYSTTVNV…GGSGISFGLS (121 aa).

The protein belongs to the ferric reductase (FRE) family. AIM14 subfamily.

Its subcellular location is the membrane. In terms of biological role, probable cell surface metalloreductase. May be involved in iron or copper homeostasis. The chain is Probable metalloreductase AIM14 (AIM14) from Kluyveromyces lactis (strain ATCC 8585 / CBS 2359 / DSM 70799 / NBRC 1267 / NRRL Y-1140 / WM37) (Yeast).